The sequence spans 226 residues: 2-C-methyl-D-erythritol 4-phosphate cytidylyltransferase (226 aa).

This sequence belongs to the IspD/TarI cytidylyltransferase family. IspD subfamily.

The catalysed reaction is 2-C-methyl-D-erythritol 4-phosphate + CTP + H(+) = 4-CDP-2-C-methyl-D-erythritol + diphosphate. The protein operates within isoprenoid biosynthesis; isopentenyl diphosphate biosynthesis via DXP pathway; isopentenyl diphosphate from 1-deoxy-D-xylulose 5-phosphate: step 2/6. Functionally, catalyzes the formation of 4-diphosphocytidyl-2-C-methyl-D-erythritol from CTP and 2-C-methyl-D-erythritol 4-phosphate (MEP). In Bacillus thuringiensis (strain Al Hakam), this protein is 2-C-methyl-D-erythritol 4-phosphate cytidylyltransferase.